We begin with the raw amino-acid sequence, 419 residues long: Mitochondrial chaperone BCS1 (419 aa).

The Mitochondrial intermembrane segment spans residues 1-15 (MPLSDFVLALKDNPY). The chain crosses the membrane as a helical span at residues 16 to 32 (FGAGFGLVGVGTALALA). The Mitochondrial matrix segment spans residues 33–419 (RKGAQLGLVA…AIQNAESLRR (387 aa)). Tyrosine 181 bears the Phosphotyrosine mark. 230–237 (GPPGCGKS) is a binding site for ATP.

This sequence belongs to the AAA ATPase family. BCS1 subfamily. As to quaternary structure, interacts with LETM1.

The protein localises to the mitochondrion inner membrane. It catalyses the reaction ATP + H2O = ADP + phosphate + H(+). Functionally, chaperone necessary for the incorporation of Rieske iron-sulfur protein UQCRFS1 into the mitochondrial respiratory chain complex III. Plays an important role in the maintenance of mitochondrial tubular networks, respiratory chain assembly and formation of the LETM1 complex. The polypeptide is Mitochondrial chaperone BCS1 (BCS1L) (Bos taurus (Bovine)).